Consider the following 354-residue polypeptide: Replication factor C subunit 3 (354 aa).

Residue 41 to 48 (GPSGSGKK) coordinates ATP.

This sequence belongs to the activator 1 small subunits family. In terms of assembly, heterotetramer of subunits RFC2, RFC3, RFC4 and RFC5 that can form a complex with RFC1.

The protein resides in the nucleus. May be involved in DNA replication and thus regulate cell proliferation. This chain is Replication factor C subunit 3 (RFC3), found in Arabidopsis thaliana (Mouse-ear cress).